The sequence spans 309 residues: MVGFKATDVPPTATVKFLGAGTAACIADLITFPLDTAKVRLQIQGESQGPVHATASAQYRGVMGTILTMVRTEGPRSLYNGLVAGLQRQMSFASVRIGLYDSVKQFYTKGSEHASIGSRLLAGSTTGALAVAVAQPTDVVKVRFQAQARAGGGRRYQSTVNAYKTIAREEGFRGLWKGTSPNVARNAIVNCAELVTYDLIKDALLKANLMTDDLPCHFTSAFGAGFCTTVIASPVDVVKTRYMNSALGQYSSAGHCALTMLQKEGPRAFYKGFMPSFLRLGSWNVVMFVTYEQLKRALMAACTSREAPF.

The Mitochondrial intermembrane portion of the chain corresponds to 1–16; sequence MVGFKATDVPPTATVK. 3 Solcar repeats span residues 11–106, 114–203, and 212–297; these read PTAT…VKQF, ASIG…IKDA, and DDLP…LKRA. The segment at 16–63 is important for interaction with long-chain fatty acids; that stretch reads KFLGAGTAACIADLITFPLDTAKVRLQIQGESQGPVHATASAQYRGVM. A helical membrane pass occupies residues 17–40; it reads FLGAGTAACIADLITFPLDTAKVR. Topologically, residues 41–77 are mitochondrial matrix; that stretch reads LQIQGESQGPVHATASAQYRGVMGTILTMVRTEGPRS. Residues 78–103 traverse the membrane as a helical segment; sequence LYNGLVAGLQRQMSFASVRIGLYDSV. Residues 104–119 are Mitochondrial intermembrane-facing; it reads KQFYTKGSEHASIGSR. Residues 120 to 145 traverse the membrane as a helical segment; the sequence is LLAGSTTGALAVAVAQPTDVVKVRFQ. At 146–173 the chain is on the mitochondrial matrix side; sequence AQARAGGGRRYQSTVNAYKTIAREEGFR. A helical transmembrane segment spans residues 174–199; that stretch reads GLWKGTSPNVARNAIVNCAELVTYDL. Residues 200–217 lie on the Mitochondrial intermembrane side of the membrane; that stretch reads IKDALLKANLMTDDLPCH. Residues 218–242 form a helical membrane-spanning segment; the sequence is FTSAFGAGFCTTVIASPVDVVKTRY. Topologically, residues 243–268 are mitochondrial matrix; the sequence is MNSALGQYSSAGHCALTMLQKEGPRA. Residues 269-294 traverse the membrane as a helical segment; the sequence is FYKGFMPSFLRLGSWNVVMFVTYEQL. Residues 278-285 form an important for interaction with long-chain fatty acids region; the sequence is LRLGSWNV. At 295-309 the chain is on the mitochondrial intermembrane side; sequence KRALMAACTSREAPF.

It belongs to the mitochondrial carrier (TC 2.A.29) family. As to quaternary structure, homotetramer. Adopts an asymmetrical dimer of dimers functional form. Interacts with MICU1 (when methylated); leading to decrease the calcium sensitivity of MICU1.

The protein resides in the mitochondrion inner membrane. It catalyses the reaction L-aspartate(out) + phosphate(in) + H(+)(in) = L-aspartate(in) + phosphate(out) + H(+)(out). It carries out the reaction oxaloacetate(out) + phosphate(in) + H(+)(in) = oxaloacetate(in) + phosphate(out) + H(+)(out). The catalysed reaction is (S)-malate(out) + phosphate(in) + H(+)(in) = (S)-malate(in) + phosphate(out) + H(+)(out). The enzyme catalyses malonate(out) + phosphate(in) + H(+)(in) = malonate(in) + phosphate(out) + H(+)(out). It catalyses the reaction sulfate(out) + phosphate(in) + H(+)(in) = sulfate(in) + phosphate(out) + H(+)(out). It carries out the reaction (S)-malate(out) = (S)-malate(in). The catalysed reaction is L-aspartate(out) = L-aspartate(in). The enzyme catalyses phosphate(in) = phosphate(out). It catalyses the reaction chloride(in) = chloride(out). It carries out the reaction H(+)(in) = H(+)(out). The catalysed reaction is a long-chain fatty acid(out) = a long-chain fatty acid(in). Functionally, antiporter that exports dicarboxylate intermediates of the Krebs cycle in exchange for phosphate plus a proton across the inner membrane of mitochondria, a process driven by mitochondrial motive force with an overall impact on glycolysis, glutaminolysis and glutathione-dependent redox balance. Continuous export of oxaloacetate and related four-carbon dicarboxylates from mitochondrial matrix into the cytosol negatively regulates the oxidation of acetyl-CoA substrates via the Krebs cycle lowering the ATP/ADP ratio and reactive oxygen species (ROS) production. May mediate inducible proton entry into the mitochondrial matrix affecting ATP turnover as a protection mechanism against oxidative stress. The proton currents are most likely associated with fatty acid flipping across the inner membrane of mitochondria in a metabolic process regulated by free fatty acids and purine nucleotides. Regulates the use of glucose as a source of energy. Required for glucose-induced DRP1-dependent mitochondrial fission and neuron activation in the ventromedial nucleus of the hypothalamus (VMH). This mitochondrial adaptation mechanism modulates the VMH pool of glucose-excited neurons with an impact on systemic glucose homeostasis. Regulates ROS levels and metabolic reprogramming of macrophages during the resolution phase of inflammation. Attenuates ROS production in response to IL33 to preserve the integrity of the Krebs cycle required for persistent production of itaconate and subsequent GATA3-dependent differentiation of inflammation-resolving alternatively activated macrophages. Can unidirectionally transport anions including L-malate, L-aspartate, phosphate and chloride ions. Does not mediate adaptive thermogenesis. The polypeptide is Dicarboxylate carrier UCP2 (UCP2) (Pongo abelii (Sumatran orangutan)).